The primary structure comprises 568 residues: Delta 8-(E)-sphingolipid desaturase (568 aa).

The 76-residue stretch at 2-77 (DNIISRGEIE…FRKWRIGRID (76 aa)) folds into the Cytochrome b5 heme-binding domain. Positions 37 and 60 each coordinate heme. The next 2 helical transmembrane spans lie at 241–261 (FWSA…AHDA) and 272–292 (LDNI…LGWW). Residues 259–263 (HDAGH) carry the Histidine box-1 motif. The Histidine box-2 signature appears at 296–300 (HNVHH). The next 3 membrane-spanning stretches (helical) occupy residues 352–377 (YLYY…LLGL), 389–409 (YFEL…LVGC), and 421–441 (IMVS…SHFA). The Histidine box-3 motif lies at 480-484 (QVVHH). Over residues 549–560 (ATGEREADEKTY) the composition is skewed to basic and acidic residues. Positions 549–568 (ATGEREADEKTYRTKSIKNA) are disordered.

This sequence belongs to the fatty acid desaturase type 1 family.

It localises to the membrane. It carries out the reaction an N-acylsphing-4-enine + 2 Fe(II)-[cytochrome b5] + O2 + 2 H(+) = a (4E,8E)-4-sphinga-4,8-dienine ceramide + 2 Fe(III)-[cytochrome b5] + 2 H2O. It functions in the pathway lipid metabolism; sphingolipid metabolism. In terms of biological role, delta(8)-fatty-acid desaturase which introduces a double bond at the 8-position in the long-chain base (LCB) of ceramides. Required for the formation of the di-unsaturated sphingoid base (E,E)-sphinga-4,8-dienine during glucosylceramide (GluCer) biosynthesis. The chain is Delta 8-(E)-sphingolipid desaturase from Lachancea kluyveri (strain ATCC 58438 / CBS 3082 / BCRC 21498 / NBRC 1685 / JCM 7257 / NCYC 543 / NRRL Y-12651) (Yeast).